A 217-amino-acid chain; its full sequence is Large ribosomal subunit protein uL1 (217 aa).

Belongs to the universal ribosomal protein uL1 family. Part of the 50S ribosomal subunit.

In terms of biological role, binds directly to 23S rRNA. The L1 stalk is quite mobile in the ribosome, and is involved in E site tRNA release. Its function is as follows. Protein L1 is also a translational repressor protein, it controls the translation of the L11 operon by binding to its mRNA. In Anaplasma marginale (strain St. Maries), this protein is Large ribosomal subunit protein uL1.